We begin with the raw amino-acid sequence, 476 residues long: Ribulose bisphosphate carboxylase large chain (476 aa).

Positions 1–2 (MS) are excised as a propeptide. N-acetylproline is present on P3. Position 14 is an N6,N6,N6-trimethyllysine (K14). Substrate-binding residues include N123 and T173. The active-site Proton acceptor is K175. K177 provides a ligand contact to substrate. Positions 201, 203, and 204 each coordinate Mg(2+). K201 is subject to N6-carboxylysine. Substrate contacts are provided by R295, H327, and S379.

Belongs to the RuBisCO large chain family. Type I subfamily. In terms of assembly, heterohexadecamer of 8 large chains and 8 small chains; disulfide-linked. The disulfide link is formed within the large subunit homodimers. It depends on Mg(2+) as a cofactor. In terms of processing, the disulfide bond which can form in the large chain dimeric partners within the hexadecamer appears to be associated with oxidative stress and protein turnover.

The protein localises to the plastid. Its subcellular location is the chloroplast. The enzyme catalyses 2 (2R)-3-phosphoglycerate + 2 H(+) = D-ribulose 1,5-bisphosphate + CO2 + H2O. It catalyses the reaction D-ribulose 1,5-bisphosphate + O2 = 2-phosphoglycolate + (2R)-3-phosphoglycerate + 2 H(+). In terms of biological role, ruBisCO catalyzes two reactions: the carboxylation of D-ribulose 1,5-bisphosphate, the primary event in carbon dioxide fixation, as well as the oxidative fragmentation of the pentose substrate in the photorespiration process. Both reactions occur simultaneously and in competition at the same active site. The protein is Ribulose bisphosphate carboxylase large chain of Barnadesia caryophylla (Xenophontia caryophylla).